Reading from the N-terminus, the 1128-residue chain is Large proline-rich protein BAG6 (1128 aa).

The residue at position 1 (Met-1) is an N-acetylmethionine. The 76-residue stretch at 17–92 (LEVLVKTLDS…HLVERAPPQT (76 aa)) folds into the Ubiquitin-like domain. Disordered regions lie at residues 87-126 (RAPP…SVHD), 185-267 (CRGG…NHPS), 380-435 (VTMT…AASH), 456-523 (IQDS…ALPG), and 555-598 (PGMA…SASD). A compositionally biased stretch (low complexity) spans 95 to 108 (PSGASSGTGSASAT). Ser-96 bears the Phosphoserine mark. Thr-117 carries the phosphothreonine modification. A compositionally biased stretch (polar residues) spans 189-201 (SQAQHSQPPSQMP). Repeat 1 spans residues 236 to 265 (RASAQSPGLSPSGPAPAGPTPAPETNAPNH). The segment at 236–630 (RASAQSPGLS…MTSPTITVAM (395 aa)) is 4 X 29 AA approximate repeats. Low complexity predominate over residues 238 to 247 (SAQSPGLSPS). Pro residues-rich tracts occupy residues 248–257 (GPAPAGPTPA) and 388–402 (RPPP…PPGP). Low complexity predominate over residues 403–412 (GQASSLAPSS). The stretch at 410–438 (PSSTTVESSTEGAPPPGPAPPPAASHPRV) is repeat 2. Pro residues-rich tracts occupy residues 422–433 (APPPGPAPPPAA) and 502–515 (PTPP…PGGP). A compositionally biased stretch (low complexity) spans 564–581 (ATASASAGTTNTATTAGP). Tandem repeats lie at residues 569–596 (SAGT…QPSA) and 602–630 (SQLL…TVAM). Over residues 583–594 (PGGPAQPPPPQP) the composition is skewed to pro residues. Disordered regions lie at residues 648 to 689 (QTAA…GLGP) and 939 to 1128 (VGDP…AEDP). Over residues 652-677 (PPAPPPPPPPPPPAPEQQTAPPPGSP) the composition is skewed to pro residues. Positions 678–688 (PGGAGSPGGLG) are enriched in gly residues. Ser-960 and Ser-969 each carry phosphoserine. Over residues 999 to 1016 (AAAETEPWAAAVPPEWVP) the composition is skewed to low complexity. Residues 1006-1036 (WAAAVPPEWVPIIQQDIQSQRKVKPQPPLSD) are required for interaction with GET4. Positions 1008-1050 (AAVPPEWVPIIQQDIQSQRKVKPQPPLSDAYLSGMPAKRRKTM) match the Nuclear localization site motif. Positions 1018 to 1128 (IQQDIQSQRK…NAHRAFAEDP (111 aa)) are sufficient for the delivery of client proteins to the endoplasmic reticulum. Phosphothreonine is present on Thr-1049. Residues 1054 to 1111 (GPQLLLSEAVSRAAKAAGARPLTSPESLSRDLEAPEVQESYRQQLRADIQKRLQEDPN) form a BAG-similar domain, required and sufficient for interaction with UBL4A region. Over residues 1062–1072 (AVSRAAKAAGA) the composition is skewed to low complexity. 2 positions are modified to phosphoserine: Ser-1077 and Ser-1113.

In terms of assembly, component of the BAG6/BAT3 complex, also named BAT3 complex, at least composed of BAG6, UBL4A and GET4/TRC35. Interacts with GET4; the interaction is direct and localizes BAG6 in the cytosol. Interacts with UBL4A; the interaction is direct and required for UBL4A protein stability. Interacts with AIFM1. Interacts with HSPA2. Interacts with CTCFL. Interacts with p300/EP300. Interacts (via ubiquitin-like domain) with RNF126; required for BAG6-dependent ubiquitination of proteins mislocalized to the cytosol. Interacts (via ubiquitin-like domain) with SGTA; SGTA competes with RNF126 by binding the same region of BAG6, thereby promoting deubiquitination of BAG6-target proteins and rescuing them from degradation. Interacts with ricin A chain. Interacts with VCP and AMFR; both form the VCP/p97-AMFR/gp78 complex. Interacts with SYVN1. Interacts with USP13; the interaction is direct and may mediate UBL4A deubiquitination. Interacts with ZFAND2B. Interacts with KPNA2. Interacts with UBQLN4. Post-translationally, ricin can induce a cleavage by the caspase CASP3. The released C-terminal peptide induces apoptosis.

The protein resides in the cytoplasm. It localises to the cytosol. Its subcellular location is the nucleus. The protein localises to the secreted. It is found in the extracellular exosome. Its function is as follows. ATP-independent molecular chaperone preventing the aggregation of misfolded and hydrophobic patches-containing proteins. Functions as part of a cytosolic protein quality control complex, the BAG6/BAT3 complex, which maintains these client proteins in a soluble state and participates in their proper delivery to the endoplasmic reticulum or alternatively can promote their sorting to the proteasome where they undergo degradation. The BAG6/BAT3 complex is involved in the post-translational delivery of tail-anchored/type II transmembrane proteins to the endoplasmic reticulum membrane. Recruited to ribosomes, it interacts with the transmembrane region of newly synthesized tail-anchored proteins and together with SGTA and ASNA1 mediates their delivery to the endoplasmic reticulum. Client proteins that cannot be properly delivered to the endoplasmic reticulum are ubiquitinated by RNF126, an E3 ubiquitin-protein ligase associated with BAG6 and are sorted to the proteasome. SGTA which prevents the recruitment of RNF126 to BAG6 may negatively regulate the ubiquitination and the proteasomal degradation of client proteins. Similarly, the BAG6/BAT3 complex also functions as a sorting platform for proteins of the secretory pathway that are mislocalized to the cytosol either delivering them to the proteasome for degradation or to the endoplasmic reticulum. The BAG6/BAT3 complex also plays a role in the endoplasmic reticulum-associated degradation (ERAD), a quality control mechanism that eliminates unwanted proteins of the endoplasmic reticulum through their retrotranslocation to the cytosol and their targeting to the proteasome. It maintains these retrotranslocated proteins in an unfolded yet soluble state condition in the cytosol to ensure their proper delivery to the proteasome. BAG6 is also required for selective ubiquitin-mediated degradation of defective nascent chain polypeptides by the proteasome. In this context, it may participate in the production of antigenic peptides and play a role in antigen presentation in immune response. BAG6 is also involved in endoplasmic reticulum stress-induced pre-emptive quality control, a mechanism that selectively attenuates the translocation of newly synthesized proteins into the endoplasmic reticulum and reroutes them to the cytosol for proteasomal degradation. BAG6 may ensure the proper degradation of these proteins and thereby protects the endoplasmic reticulum from protein overload upon stress. By inhibiting the polyubiquitination and subsequent proteasomal degradation of HSPA2 it may also play a role in the assembly of the synaptonemal complex during spermatogenesis. Also positively regulates apoptosis by interacting with and stabilizing the proapoptotic factor AIFM1. By controlling the steady-state expression of the IGF1R receptor, indirectly regulates the insulin-like growth factor receptor signaling pathway. Involved in DNA damage-induced apoptosis: following DNA damage, accumulates in the nucleus and forms a complex with p300/EP300, enhancing p300/EP300-mediated p53/TP53 acetylation leading to increase p53/TP53 transcriptional activity. When nuclear, may also act as a component of some chromatin regulator complex that regulates histone 3 'Lys-4' dimethylation (H3K4me2). Functionally, released extracellularly via exosomes, it is a ligand of the natural killer/NK cells receptor NCR3 and stimulates NK cells cytotoxicity. It may thereby trigger NK cells cytotoxicity against neighboring tumor cells and immature myeloid dendritic cells (DC). In terms of biological role, may mediate ricin-induced apoptosis. The polypeptide is Large proline-rich protein BAG6 (Sus scrofa (Pig)).